The primary structure comprises 342 residues: N-acetyl-gamma-glutamyl-phosphate reductase (342 aa).

The active site involves Cys147.

It belongs to the NAGSA dehydrogenase family. Type 1 subfamily.

The protein localises to the cytoplasm. It catalyses the reaction N-acetyl-L-glutamate 5-semialdehyde + phosphate + NADP(+) = N-acetyl-L-glutamyl 5-phosphate + NADPH + H(+). Its pathway is amino-acid biosynthesis; L-arginine biosynthesis; N(2)-acetyl-L-ornithine from L-glutamate: step 3/4. In terms of biological role, catalyzes the NADPH-dependent reduction of N-acetyl-5-glutamyl phosphate to yield N-acetyl-L-glutamate 5-semialdehyde. This is N-acetyl-gamma-glutamyl-phosphate reductase from Campylobacter jejuni subsp. jejuni serotype O:6 (strain 81116 / NCTC 11828).